A 629-amino-acid polypeptide reads, in one-letter code: tRNA uridine 5-carboxymethylaminomethyl modification enzyme MnmG (629 aa).

13–18 is a binding site for FAD; that stretch reads GGGHAG. 273-287 is an NAD(+) binding site; the sequence is GPRYCPSIEDKIHRF.

The protein belongs to the MnmG family. As to quaternary structure, homodimer. Heterotetramer of two MnmE and two MnmG subunits. FAD serves as cofactor.

The protein localises to the cytoplasm. In terms of biological role, NAD-binding protein involved in the addition of a carboxymethylaminomethyl (cmnm) group at the wobble position (U34) of certain tRNAs, forming tRNA-cmnm(5)s(2)U34. This Shewanella amazonensis (strain ATCC BAA-1098 / SB2B) protein is tRNA uridine 5-carboxymethylaminomethyl modification enzyme MnmG.